The sequence spans 184 residues: MKKLSILAALAASPAMAATGPFFSLSNTNFIVTLAFLIFMGILVYAKVPGRILGMLDRRAVQIRSELEEARALREEARTILASYDRKQKEVQEQAARIVASARDEAQAAAEQAKADLKASIARRLAAAEDQIASAEAGAVRAIREQAISVAVAAASDVLARQMTPAATSASIDESIKEVEARFH.

The chain crosses the membrane as a helical span at residues 4–24 (LSILAALAASPAMAATGPFFS).

It belongs to the ATPase B chain family. F-type ATPases have 2 components, F(1) - the catalytic core - and F(0) - the membrane proton channel. F(1) has five subunits: alpha(3), beta(3), gamma(1), delta(1), epsilon(1). F(0) has three main subunits: a(1), b(2) and c(10-14). The alpha and beta chains form an alternating ring which encloses part of the gamma chain. F(1) is attached to F(0) by a central stalk formed by the gamma and epsilon chains, while a peripheral stalk is formed by the delta and b chains.

It is found in the cell inner membrane. F(1)F(0) ATP synthase produces ATP from ADP in the presence of a proton or sodium gradient. F-type ATPases consist of two structural domains, F(1) containing the extramembraneous catalytic core and F(0) containing the membrane proton channel, linked together by a central stalk and a peripheral stalk. During catalysis, ATP synthesis in the catalytic domain of F(1) is coupled via a rotary mechanism of the central stalk subunits to proton translocation. Functionally, component of the F(0) channel, it forms part of the peripheral stalk, linking F(1) to F(0). This is ATP synthase subunit b 1 from Cereibacter sphaeroides (strain ATCC 17025 / ATH 2.4.3) (Rhodobacter sphaeroides).